Here is a 162-residue protein sequence, read N- to C-terminus: Protein NrdI (162 aa).

Belongs to the NrdI family.

Functionally, probably involved in ribonucleotide reductase function. The sequence is that of Protein NrdI from Streptococcus pyogenes serotype M3 (strain ATCC BAA-595 / MGAS315).